Consider the following 287-residue polypeptide: MTAPAKQIVIITGMSGSGKSTAIRALEDSGFFCIDNLPVLLLPKLTELAGGGHFERMALVVDVREGVFLKDAPRILAEVRRAGHQVEVLFLDASDDSLIRRFSETRRRHPLAPNGTVAEGIKAERQALRDLRELADQVIDSSTLNVHDLKRMVQARFSPEPAAGPSLSIMSFGYRYGVPPQADLVLDVRFLPNPYFVPEMKGLTGKVPKVAAYVLEREETQQFLEKVVDLCRFLFPRYQKEGKAYLTVALGCTGGKHRSVAIAAELTQRLTDEDTRVQLWDRDIEKE.

13–20 (GMSGSGKS) contacts ATP. 62–65 (DVRE) contributes to the GTP binding site.

Belongs to the RapZ-like family.

In terms of biological role, displays ATPase and GTPase activities. In Myxococcus xanthus (strain DK1622), this protein is Nucleotide-binding protein MXAN_6564.